Reading from the N-terminus, the 183-residue chain is ATP synthase subunit delta (183 aa).

This sequence belongs to the ATPase delta chain family. In terms of assembly, F-type ATPases have 2 components, F(1) - the catalytic core - and F(0) - the membrane proton channel. F(1) has five subunits: alpha(3), beta(3), gamma(1), delta(1), epsilon(1). F(0) has three main subunits: a(1), b(2) and c(10-14). The alpha and beta chains form an alternating ring which encloses part of the gamma chain. F(1) is attached to F(0) by a central stalk formed by the gamma and epsilon chains, while a peripheral stalk is formed by the delta and b chains.

The protein resides in the cell inner membrane. Its function is as follows. F(1)F(0) ATP synthase produces ATP from ADP in the presence of a proton or sodium gradient. F-type ATPases consist of two structural domains, F(1) containing the extramembraneous catalytic core and F(0) containing the membrane proton channel, linked together by a central stalk and a peripheral stalk. During catalysis, ATP synthesis in the catalytic domain of F(1) is coupled via a rotary mechanism of the central stalk subunits to proton translocation. Functionally, this protein is part of the stalk that links CF(0) to CF(1). It either transmits conformational changes from CF(0) to CF(1) or is implicated in proton conduction. The protein is ATP synthase subunit delta of Ruthia magnifica subsp. Calyptogena magnifica.